The primary structure comprises 400 residues: tRNA-specific 2-thiouridylase MnmA (400 aa).

Residues 19-26 (AMSGGVDS) and leucine 45 each bind ATP. Residue cysteine 113 is the Nucleophile of the active site. Cysteine 113 and cysteine 210 are oxidised to a cystine. Residue glycine 137 coordinates ATP. The tract at residues 160–162 (RDQ) is interaction with tRNA. Cysteine 210 functions as the Cysteine persulfide intermediate in the catalytic mechanism.

It belongs to the MnmA/TRMU family.

The protein localises to the cytoplasm. It carries out the reaction S-sulfanyl-L-cysteinyl-[protein] + uridine(34) in tRNA + AH2 + ATP = 2-thiouridine(34) in tRNA + L-cysteinyl-[protein] + A + AMP + diphosphate + H(+). In terms of biological role, catalyzes the 2-thiolation of uridine at the wobble position (U34) of tRNA, leading to the formation of s(2)U34. In Nitrobacter hamburgensis (strain DSM 10229 / NCIMB 13809 / X14), this protein is tRNA-specific 2-thiouridylase MnmA.